We begin with the raw amino-acid sequence, 168 residues long: NAD(P)H-quinone oxidoreductase subunit J, chloroplastic (168 aa).

This sequence belongs to the complex I 30 kDa subunit family. In terms of assembly, NDH is composed of at least 16 different subunits, 5 of which are encoded in the nucleus.

It is found in the plastid. Its subcellular location is the chloroplast thylakoid membrane. It catalyses the reaction a plastoquinone + NADH + (n+1) H(+)(in) = a plastoquinol + NAD(+) + n H(+)(out). It carries out the reaction a plastoquinone + NADPH + (n+1) H(+)(in) = a plastoquinol + NADP(+) + n H(+)(out). Its function is as follows. NDH shuttles electrons from NAD(P)H:plastoquinone, via FMN and iron-sulfur (Fe-S) centers, to quinones in the photosynthetic chain and possibly in a chloroplast respiratory chain. The immediate electron acceptor for the enzyme in this species is believed to be plastoquinone. Couples the redox reaction to proton translocation, and thus conserves the redox energy in a proton gradient. The chain is NAD(P)H-quinone oxidoreductase subunit J, chloroplastic from Chaetosphaeridium globosum (Charophycean green alga).